A 381-amino-acid chain; its full sequence is Chaperone protein DnaJ (381 aa).

Residues 5-70 form the J domain; sequence DFYEVLGVGR…QKKAAYDQYG (66 aa). A CR-type zinc finger spans residues 136 to 214; that stretch reads GCSKEIEVPT…CHGQGRKQKT (79 aa). Residues C149, C152, C166, C169, C188, C191, C202, and C205 each contribute to the Zn(2+) site. CXXCXGXG motif repeat units lie at residues 149–156, 166–173, 188–195, and 202–209; these read CDACDGSG, CGTCHGHG, CPTCHGKG, and CNVCHGQG.

This sequence belongs to the DnaJ family. Homodimer. Zn(2+) is required as a cofactor.

It localises to the cytoplasm. In terms of biological role, participates actively in the response to hyperosmotic and heat shock by preventing the aggregation of stress-denatured proteins and by disaggregating proteins, also in an autonomous, DnaK-independent fashion. Unfolded proteins bind initially to DnaJ; upon interaction with the DnaJ-bound protein, DnaK hydrolyzes its bound ATP, resulting in the formation of a stable complex. GrpE releases ADP from DnaK; ATP binding to DnaK triggers the release of the substrate protein, thus completing the reaction cycle. Several rounds of ATP-dependent interactions between DnaJ, DnaK and GrpE are required for fully efficient folding. Also involved, together with DnaK and GrpE, in the DNA replication of plasmids through activation of initiation proteins. The chain is Chaperone protein DnaJ from Vibrio cholerae serotype O1 (strain ATCC 39541 / Classical Ogawa 395 / O395).